The sequence spans 785 residues: MEKKVEAILEFDKIKKQLTEFASSSLGEQAILELAPATDFQVVQKTQLETEEGAKIIRLRGSAPITGLTDVFAHLKRLEIGGDLNGLEIYQIGSNLRVSRQMKNFMNDLLEIGVELPLLGALSDELLVLKEVEEDIAISVDESGKVLDTASEALSTIRRTLRRTEDRVREKLESYLRDRNASKMLSDAVITIRNDRYVIPVKQEYKGHYGGIVHDQSASGQTLFIEPQSVVDLNNERKALQAKEKQEIERILAEISASLAAWINEIHHNTFILGRFDFIFAKARFGKAMKAVTPHLSDAGVVHLIAARHPLLDAAKVVANDIYLGEDFTTIVITGPNTGGKTITLKTLGLLTLMAQSGLQIPAQEDSTIAVFEHVFADIGDEQSIEQSLSTFSSHMTNIVSILGNVNQKSLILYDELGAGTDPQEGAALAIAILDASHAKGASVVATTHYPELKAYGYNRVHATNASVEFNVETLSPTYKLLIGVPGRSNAFDISRRLGLSENIITEARSLVDTESADLNDMISSLEEKRNLAETEYEEARELARGADNLLKDLQKEISNYYQQKDKLIEQASEKAATIVEKAEAEAEEIIHELRTMQLNGAAGIKEHELIDAKTRLGNAKPKTINKTIPQAPKQKPHVFQEGDNVRVLSLGQKGTLLNKISDKEWNVQIGIIKMKIKTTDLEYIQPEKPKKQRIITSVHSSGSPAKSELDLRGERYEDALQKVDKYLDEALLAGYPQVAIIHGKGTGALRTGVTEYLKNHRMVKSIRFGAAAEGGNGVTIVEFK.

Position 335-342 (glycine 335–threonine 342) interacts with ATP. Positions leucine 710–lysine 785 constitute a Smr domain.

The protein belongs to the DNA mismatch repair MutS family. MutS2 subfamily. Homodimer. Binds to stalled ribosomes, contacting rRNA.

Endonuclease that is involved in the suppression of homologous recombination and thus may have a key role in the control of bacterial genetic diversity. In terms of biological role, acts as a ribosome collision sensor, splitting the ribosome into its 2 subunits. Detects stalled/collided 70S ribosomes which it binds and splits by an ATP-hydrolysis driven conformational change. Acts upstream of the ribosome quality control system (RQC), a ribosome-associated complex that mediates the extraction of incompletely synthesized nascent chains from stalled ribosomes and their subsequent degradation. Probably generates substrates for RQC. In Listeria monocytogenes serotype 4b (strain CLIP80459), this protein is Endonuclease MutS2.